Reading from the N-terminus, the 658-residue chain is Exoribonuclease 2 (658 aa).

Positions 189–531 (REDLTALHFI…NHRLIKAVLT (343 aa)) constitute an RNB domain. The S1 motif domain maps to 576–658 (KPTFQAEIQD…ETRSIVGTLC (83 aa)).

It belongs to the RNR ribonuclease family. RNase II subfamily.

The protein localises to the cytoplasm. The enzyme catalyses Exonucleolytic cleavage in the 3'- to 5'-direction to yield nucleoside 5'-phosphates.. Involved in mRNA degradation. Hydrolyzes single-stranded polyribonucleotides processively in the 3' to 5' direction. The sequence is that of Exoribonuclease 2 from Pasteurella multocida (strain Pm70).